The sequence spans 162 residues: Nucleotide-binding protein ABSDF0503 (162 aa).

It belongs to the YajQ family.

Nucleotide-binding protein. The sequence is that of Nucleotide-binding protein ABSDF0503 from Acinetobacter baumannii (strain SDF).